A 418-amino-acid chain; its full sequence is Glutamyl-tRNA reductase (418 aa).

Residues 49–52, Ser109, 114–116, and Gln120 each bind substrate; these read TCNR and EPQ. The active-site Nucleophile is the Cys50. An NADP(+)-binding site is contributed by 189 to 194; it reads GAGETI.

It belongs to the glutamyl-tRNA reductase family. Homodimer.

The enzyme catalyses (S)-4-amino-5-oxopentanoate + tRNA(Glu) + NADP(+) = L-glutamyl-tRNA(Glu) + NADPH + H(+). Its pathway is porphyrin-containing compound metabolism; protoporphyrin-IX biosynthesis; 5-aminolevulinate from L-glutamyl-tRNA(Glu): step 1/2. Catalyzes the NADPH-dependent reduction of glutamyl-tRNA(Glu) to glutamate 1-semialdehyde (GSA). This Escherichia coli O157:H7 protein is Glutamyl-tRNA reductase.